Here is a 129-residue protein sequence, read N- to C-terminus: Small ribosomal subunit protein uS11 (129 aa).

Belongs to the universal ribosomal protein uS11 family. Part of the 30S ribosomal subunit. Interacts with proteins S7 and S18. Binds to IF-3.

In terms of biological role, located on the platform of the 30S subunit, it bridges several disparate RNA helices of the 16S rRNA. Forms part of the Shine-Dalgarno cleft in the 70S ribosome. This is Small ribosomal subunit protein uS11 from Phenylobacterium zucineum (strain HLK1).